The chain runs to 345 residues: MATYHHWTVGQALALFDKPLLELLFEAQQVHRQHFDPRQVQVSTLLSIKTGACPEDCKYCPQSSRYKTGLESERLMQVEQVLESAKKAKAAGSTRFCMGAAWKNPHERDMPYLVKMVEGVKALGMETCMTLGSLSKQQAHRLADAGLDYYNHNLDTSPEFYGSIITTRSYQERLDTLNEVRDAGIKVCSGGIVGLGETVRDRAGLLVQLANLPKPPESVPINMLVKVKGTPLENNAEVDAFEFIRTIAVARIMMPSSYVRLSAGREQMNEQTQAMCFMAGANSIFYGCKLLTTPNPDEDNDLQLFRKLGLNPQQTATSHGDREQQQALTEQLLHGDTAQFYNAAV.

Residues 38–256 form the Radical SAM core domain; that stretch reads RQVQVSTLLS…IAVARIMMPS (219 aa). 3 residues coordinate [4Fe-4S] cluster: cysteine 53, cysteine 57, and cysteine 60. The [2Fe-2S] cluster site is built by cysteine 97, cysteine 128, cysteine 188, and arginine 260.

The protein belongs to the radical SAM superfamily. Biotin synthase family. As to quaternary structure, homodimer. Requires [4Fe-4S] cluster as cofactor. [2Fe-2S] cluster is required as a cofactor.

The enzyme catalyses (4R,5S)-dethiobiotin + (sulfur carrier)-SH + 2 reduced [2Fe-2S]-[ferredoxin] + 2 S-adenosyl-L-methionine = (sulfur carrier)-H + biotin + 2 5'-deoxyadenosine + 2 L-methionine + 2 oxidized [2Fe-2S]-[ferredoxin]. The protein operates within cofactor biosynthesis; biotin biosynthesis; biotin from 7,8-diaminononanoate: step 2/2. Functionally, catalyzes the conversion of dethiobiotin (DTB) to biotin by the insertion of a sulfur atom into dethiobiotin via a radical-based mechanism. The chain is Biotin synthase from Yersinia pseudotuberculosis serotype O:1b (strain IP 31758).